The following is a 238-amino-acid chain: Flagellar L-ring protein (238 aa).

An N-terminal signal peptide occupies residues 1–16 (MNKAILAVAMVLLLAG). The N-palmitoyl cysteine moiety is linked to residue Cys17. Residue Cys17 is the site of S-diacylglycerol cysteine attachment.

This sequence belongs to the FlgH family. The basal body constitutes a major portion of the flagellar organelle and consists of four rings (L,P,S, and M) mounted on a central rod.

It is found in the cell outer membrane. It localises to the bacterial flagellum basal body. Its function is as follows. Assembles around the rod to form the L-ring and probably protects the motor/basal body from shearing forces during rotation. This chain is Flagellar L-ring protein, found in Brucella melitensis biotype 2 (strain ATCC 23457).